The primary structure comprises 257 residues: Imidazole glycerol phosphate synthase subunit HisF (257 aa).

Residues Asp11 and Asp130 contribute to the active site.

Belongs to the HisA/HisF family. As to quaternary structure, heterodimer of HisH and HisF.

The protein localises to the cytoplasm. It catalyses the reaction 5-[(5-phospho-1-deoxy-D-ribulos-1-ylimino)methylamino]-1-(5-phospho-beta-D-ribosyl)imidazole-4-carboxamide + L-glutamine = D-erythro-1-(imidazol-4-yl)glycerol 3-phosphate + 5-amino-1-(5-phospho-beta-D-ribosyl)imidazole-4-carboxamide + L-glutamate + H(+). The protein operates within amino-acid biosynthesis; L-histidine biosynthesis; L-histidine from 5-phospho-alpha-D-ribose 1-diphosphate: step 5/9. Functionally, IGPS catalyzes the conversion of PRFAR and glutamine to IGP, AICAR and glutamate. The HisF subunit catalyzes the cyclization activity that produces IGP and AICAR from PRFAR using the ammonia provided by the HisH subunit. The polypeptide is Imidazole glycerol phosphate synthase subunit HisF (Actinobacillus succinogenes (strain ATCC 55618 / DSM 22257 / CCUG 43843 / 130Z)).